We begin with the raw amino-acid sequence, 303 residues long: Sulfotransferase 6B1 (303 aa).

Residue 65–70 coordinates 3'-phosphoadenylyl sulfate; sequence KCGSNW. H118 acts as the Proton acceptor in catalysis. 3'-phosphoadenylyl sulfate is bound by residues R140, S148, Y203, 237–242, and 259–261; these read STFQAM and RKG.

This sequence belongs to the sulfotransferase 1 family. As to expression, specifically expressed in kidney and testis.

It localises to the cytoplasm. Its subcellular location is the cytosol. It catalyses the reaction thyroxine + 3'-phosphoadenylyl sulfate = thyroxine sulfate + adenosine 3',5'-bisphosphate + H(+). Functionally, sulfotransferase that utilizes 3'-phospho-5'-adenylyl sulfate (PAPS) as sulfonate donor to catalyze the sulfate conjugation of thyroxine. Involved in the metabolism of thyroxine. This is Sulfotransferase 6B1 (SULT6B1) from Homo sapiens (Human).